The sequence spans 664 residues: Probable urea active transporter 1 (664 aa).

Transmembrane regions (helical) follow at residues 9–29, 56–76, 86–106, 132–152, 165–185, 189–209, 252–272, 290–310, 327–347, 353–373, 395–415, 428–448, 454–474, 496–516, 555–575, and 587–607; these read SVGYGIVVGLGLGFAALMIFV, GLVASAVVSSWTWASTLLTSA, GAFWYASGACVQILLFTVLAI, GVFLVFAYITNILVMAMLLCG, TVAVCFLLPVGVIIYTMFGGI, FLTDYIHTVIILVILIMFSLA, GAIFFIINLAGNFGTVFVDNG, ILGGLAWFAIPWLAATTMGLV, MSDLEVSEGLVLPYAAIALMG, ATLLLVFMAVTSAASAELIAV, LLYTGHASLIVFGFAMSGFAT, YLLMGVLVCPAVVPATCVMLF, IAVTVSPVLGIISSIITWLVV, AGNVVGLLSPALYILILSIIF, VAALIITAAFIILWPWPMYGT, and WVVVGLIWIFFTVFAVGIFPL.

The protein belongs to the sodium:solute symporter (SSF) (TC 2.A.21) family.

It localises to the membrane. Involved in active transport of urea. The polypeptide is Probable urea active transporter 1 (dur3-1) (Schizosaccharomyces pombe (strain 972 / ATCC 24843) (Fission yeast)).